Reading from the N-terminus, the 1733-residue chain is DNA-directed RNA polymerase II subunit RPB1 (1733 aa).

8 residues coordinate Zn(2+): cysteine 67, cysteine 70, cysteine 77, histidine 80, cysteine 107, cysteine 110, cysteine 148, and cysteine 167. The segment at 248–260 is lid loop; the sequence is PSISFNESQRGED. The rudder loop stretch occupies residues 306–323; the sequence is NDIAGQPQALQKSGRPVK. Residues aspartate 481, aspartate 483, and aspartate 485 each coordinate Mg(2+). Lysine 695 is covalently cross-linked (Glycyl lysine isopeptide (Lys-Gly) (interchain with G-Cter in ubiquitin)). The bridging helix stretch occupies residues 810–822; it reads PQEFFFHAMGGRE. Glycyl lysine isopeptide (Lys-Gly) (interchain with G-Cter in ubiquitin) cross-links involve residues lysine 1246 and lysine 1350. Residue threonine 1471 is modified to Phosphothreonine. Positions 1537-1733 are disordered; that stretch reads VSSPGFSPTS…QKHNENENSR (197 aa). Low complexity predominate over residues 1538-1719; the sequence is SSPGFSPTSP…YSPGSPAYSP (182 aa). 23 consecutive repeat copies span residues 1549–1555, 1556–1562, 1563–1569, 1570–1576, 1577–1583, 1584–1590, 1591–1597, 1598–1604, 1605–1611, 1612–1618, 1619–1625, 1626–1632, 1633–1639, 1640–1646, 1647–1653, 1654–1660, 1661–1667, 1668–1674, 1675–1681, 1682–1688, 1689–1695, 1696–1702, and 1703–1709. The C-terminal domain (CTD); 24 X 7 AA approximate tandem repeats of Y-S-P-T-S-P-[A-S-N-G] stretch occupies residues 1549 to 1716; that stretch reads YSPTSPAYSP…SPGYSPGSPA (168 aa). Residues 1710-1716 form a 24; approximate repeat; that stretch reads YSPGSPA. Residues 1720–1733 show a composition bias toward basic and acidic residues; that stretch reads KQDEQKHNENENSR.

Belongs to the RNA polymerase beta' chain family. As to quaternary structure, component of the RNA polymerase II (Pol II) complex consisting of 12 subunits. Interacts with DEF1; the interaction is direct and serves to bridge RPB1 to the Elongin complex in a DNA-damaged dependent manner. Interacts with the Elongin subunit ELA1. Interacts with the Elongin subunit ELC1. Interacts with ASK10. Interacts with ESS1. Interacts with RTT103. Interacts with SHE2. In terms of processing, the tandem 7 residues repeats in the C-terminal domain (CTD) can be highly phosphorylated. The phosphorylation activates Pol II. Phosphorylation occurs mainly at residues 'Ser-2' and 'Ser-5' of the heptapeptide repeat. The phosphorylated form of Pol II appears to carry, on average, one phosphate per repeat. The phosphorylation state is believed to result from the balanced action of site-specific CTD kinases and phosphatases, and a 'CTD code' that specifies the position of Pol II within the transcription cycle has been proposed. Phosphorylation at 'Ser-5' occurs in promoter-proximal regions in early elongation. Phosphorylation at 'Ser-2' predominates in regions more distal to the promoter and triggers binding of the 3' RNA processing machinery. CTD kinases include KIN28 (as part of the TFKII complex, a subcomplex of the TFIIH holo complex), SSN3/SRB10 (as part of the SRB8-11 complex, a module of the Mediator complex), CTK1 (as part of CTD kinase), and probably BUR1 (as part of the BUR1-BUR2 kinase complex). Phosphatases include FCP1 and SSU72. Following transcription stress, the elongating form of RNA polymerase II (RNA pol IIo) is polyubiquitinated via 'Lys-63'-linkages on Lys-1246 by the RSP5-UBA1-UBC5 complex at DNA damage sites without leading to degradation: ubiquitination promotes RNA pol IIo backtracking to allow access by the transcription-coupled nucleotide excision repair (TC-NER) machinery. Subsequent DEF1-dependent polyubiquitination by the elongin complex via 'Lys-48'-linkages may lead to proteasome-mediated degradation; presumably at stalled RNA pol II where TC-NER has failed, to halt global transcription and enable 'last resort' DNA repair pathways.

Its subcellular location is the nucleus. It carries out the reaction RNA(n) + a ribonucleoside 5'-triphosphate = RNA(n+1) + diphosphate. Its function is as follows. DNA-dependent RNA polymerase catalyzes the transcription of DNA into RNA using the four ribonucleoside triphosphates as substrates. Largest and catalytic component of RNA polymerase II which synthesizes mRNA precursors and many functional non-coding RNAs. Forms the polymerase active center together with the second largest subunit. Pol II is the central component of the basal RNA polymerase II transcription machinery. During a transcription cycle, Pol II, general transcription factors and the Mediator complex assemble as the preinitiation complex (PIC) at the promoter. 11-15 base pairs of DNA surrounding the transcription start site are melted and the single-stranded DNA template strand of the promoter is positioned deeply within the central active site cleft of Pol II to form the open complex. After synthesis of about 30 bases of RNA, Pol II releases its contacts with the core promoter and the rest of the transcription machinery (promoter clearance) and enters the stage of transcription elongation in which it moves on the template as the transcript elongates. Pol II appears to oscillate between inactive and active conformations at each step of nucleotide addition. Elongation is influenced by the phosphorylation status of the C-terminal domain (CTD) of Pol II largest subunit (RPB1), which serves as a platform for assembly of factors that regulate transcription initiation, elongation, termination and mRNA processing. Pol II is composed of mobile elements that move relative to each other. The core element with the central large cleft comprises RPB3, RBP10, RPB11, RPB12 and regions of RPB1 and RPB2 forming the active center. The clamp element (portions of RPB1, RPB2 and RPB3) is connected to the core through a set of flexible switches and moves to open and close the cleft. A bridging helix emanates from RPB1 and crosses the cleft near the catalytic site and is thought to promote translocation of Pol II by acting as a ratchet that moves the RNA-DNA hybrid through the active site by switching from straight to bent conformations at each step of nucleotide addition. In elongating Pol II, the lid loop (RPB1) appears to act as a wedge to drive apart the DNA and RNA strands at the upstream end of the transcription bubble and guide the RNA strand toward the RNA exit groove located near the base of the largely unstructured CTD domain of RPB1. The rudder loop (RPB1) interacts with single-stranded DNA after separation from the RNA strand, likely preventing reassociation with the exiting RNA. The cleft is surrounded by jaws: an upper jaw formed by portions of RBP1, RPB2 and RPB9, and a lower jaw, formed by RPB5 and portions of RBP1. The jaws are thought to grab the incoming DNA template, mainly by RPB5 direct contacts to DNA. The protein is DNA-directed RNA polymerase II subunit RPB1 (RPO21) of Saccharomyces cerevisiae (strain ATCC 204508 / S288c) (Baker's yeast).